A 449-amino-acid chain; its full sequence is MAQFYSPNRRVTTRKAIPAKNLTVTVTSLDPFGQGVARHEGKTVFVTGVLPGEQAEVQLTEDKRQFSHAKLKRLLTHSPQRVEPQCPHFTRCGGCQQQHADITLQQSSKTAALMRLMTRETGAELPDASLIAGTPYAYRRRARLALYFQAKEQRLLMGYRQSNSHDLVDIKACPVLRPELEALLQPLRDCLSRLKAVKRLGHVELVQAENGPLLVLRHLDPLHPADEQALRDFAEQQGVSVYLAPDADSLTCLHGDEPVYLVAGLTLAFSPRDFIQVNDAVNQQMVAQALAWLDVQPQDRILDLFCGMGNFTLPLAQRAASVVGVEGVTALVEKGRENARRNALSNVTFFHQNLEDDVTQQPWVAQGFDKILLDPARAGAAGVMEQITRLAPKRVVYVSCNATTLARDSKVLLAAGFTLVNVAMLDMFPHTGHLESMALFLHDTGTRKA.

One can recognise a TRAM domain in the interval 15–73 (KAIPAKNLTVTVTSLDPFGQGVARHEGKTVFVTGVLPGEQAEVQLTEDKRQFSHAKLKR). Cysteine 86, cysteine 92, cysteine 95, and cysteine 173 together coordinate [4Fe-4S] cluster. S-adenosyl-L-methionine-binding residues include glutamine 276, phenylalanine 305, asparagine 310, glutamate 326, asparagine 353, and aspartate 374. Catalysis depends on cysteine 400, which acts as the Nucleophile.

The protein belongs to the class I-like SAM-binding methyltransferase superfamily. RNA M5U methyltransferase family. RlmD subfamily.

The catalysed reaction is uridine(1939) in 23S rRNA + S-adenosyl-L-methionine = 5-methyluridine(1939) in 23S rRNA + S-adenosyl-L-homocysteine + H(+). In terms of biological role, catalyzes the formation of 5-methyl-uridine at position 1939 (m5U1939) in 23S rRNA. The polypeptide is 23S rRNA (uracil(1939)-C(5))-methyltransferase RlmD (Pectobacterium carotovorum subsp. carotovorum (strain PC1)).